The chain runs to 392 residues: Cellobiose 2-epimerase (392 aa).

It belongs to the cellobiose 2-epimerase family.

It carries out the reaction D-cellobiose = beta-D-glucosyl-(1-&gt;4)-D-mannopyranose. In terms of biological role, catalyzes the reversible epimerization of cellobiose to 4-O-beta-D-glucopyranosyl-D-mannose (Glc-Man). Can also epimerize cellotriose to Glc-Glc-Man, cellotetraose to Glc-Glc-Glc-Man, lactose to epilactose, and mannobiose to 4-O-beta-D-mannopyranosyl-D-glucopyranose (Man-Glc). May function as a mannobiose 2-epimerase in vivo and be involved in a mannan catabolic pathway which feeds into glycolysis. The polypeptide is Cellobiose 2-epimerase (bfce) (Bacteroides fragilis (strain ATCC 25285 / DSM 2151 / CCUG 4856 / JCM 11019 / LMG 10263 / NCTC 9343 / Onslow / VPI 2553 / EN-2)).